Here is a 442-residue protein sequence, read N- to C-terminus: L-seryl-tRNA(Sec) selenium transferase (442 aa).

N6-(pyridoxal phosphate)lysine is present on Lys-284.

This sequence belongs to the SelA family. Pyridoxal 5'-phosphate serves as cofactor.

It localises to the cytoplasm. It catalyses the reaction L-seryl-tRNA(Sec) + selenophosphate + H(+) = L-selenocysteinyl-tRNA(Sec) + phosphate. Its pathway is aminoacyl-tRNA biosynthesis; selenocysteinyl-tRNA(Sec) biosynthesis; selenocysteinyl-tRNA(Sec) from L-seryl-tRNA(Sec) (bacterial route): step 1/1. Functionally, converts seryl-tRNA(Sec) to selenocysteinyl-tRNA(Sec) required for selenoprotein biosynthesis. This Campylobacter fetus subsp. fetus (strain 82-40) protein is L-seryl-tRNA(Sec) selenium transferase.